We begin with the raw amino-acid sequence, 1113 residues long: Period circadian protein homolog 3 (1113 aa).

The segment at 1–48 (MDPCGDPAVPGGDCPQTRGPGLQGASGQEGPLQGTCVDSSHSEHEDRN) is disordered. A Nuclear export signal 1 motif is present at residues 54–63 (LIMVVQEMKK). PAS domains are found at residues 120–187 (LASE…PTQL) and 258–324 (YEAP…KVLK). One can recognise a PAC domain in the interval 333–376 (HSPVRFCTQNGEYVILDSSWSSFVNPWSRKVSFIIGRHKVRTSP). Residues 399 to 408 (LQEQIHKLLL) carry the Nuclear export signal 3 motif. Residues 418–427 (GYGSLGSSGS) are compositionally biased toward low complexity. 5 disordered regions span residues 418 to 451 (GYGS…GQHE), 485 to 530 (VAET…SSSY), 561 to 580 (TSSS…SQRD), 718 to 742 (HSRC…DTSS), and 871 to 906 (LVPA…PFIS). Composition is skewed to polar residues over residues 428–441 (QEQH…SESS) and 501–530 (FSSS…SSSY). Residues 551–750 (LKRKCISCTN…SSPGAHLCPH (200 aa)) are CSNK1E binding domain. Residues 566–580 (EEAKPIPEVDSSQRD) show a composition bias toward basic and acidic residues. The Nuclear localization signal motif lies at 719–735 (SRCAGSERQKHKRKKLP). The segment covering 889 to 901 (RRVEENWEAHSEE) has biased composition (basic and acidic residues). S907 is modified (phosphoserine). Residues 913–920 (LQLNLLQE) carry the Nuclear export signal 2 motif. A disordered region spans residues 921 to 1010 (EMPAPSESAD…DRQRDEALPG (90 aa)). Positions 962-986 (ATATAQQESAAASGSSASSIYFSST) are enriched in low complexity. The span at 993-1007 (SENRQRPQDRQRDEA) shows a compositional bias: basic and acidic residues. The interval 1035-1113 (ERGREEVLKQ…LEQHPAEDTS (79 aa)) is CRY binding domain.

As to quaternary structure, homodimer. Component of the circadian core oscillator, which includes the CRY proteins, CLOCK or NPAS2, BMAL1 or BMAL2, CSNK1D and/or CSNK1E, TIMELESS and the PER proteins. Interacts directly with PER1, PER2, CRY1, CRY2, and TIMELESS; interaction with CRY1 and CRY2 is weak and not rhythmic. Interacts with FBXW11 and BTRC. Phosphorylation by CSNK1E is weak and appears to require association with PER1 and translocation to the nucleus. In terms of processing, ubiquitinated. Widely expressed. Expressed in heart, brain, lung, liver, skeletal muscle, testis, and at low level in the spleen and kidney. In brain, mainly found in the SCN, hippocampus, piriform cortex, and cerebellum. Lower level of expression in the neocortex. Expression exhibits synchronous oscillations in liver, skeletal muscle and testis.

It is found in the cytoplasm. The protein resides in the nucleus. Its function is as follows. Originally described as a core component of the circadian clock. The circadian clock, an internal time-keeping system, regulates various physiological processes through the generation of approximately 24 hour circadian rhythms in gene expression, which are translated into rhythms in metabolism and behavior. It is derived from the Latin roots 'circa' (about) and 'diem' (day) and acts as an important regulator of a wide array of physiological functions including metabolism, sleep, body temperature, blood pressure, endocrine, immune, cardiovascular, and renal function. Consists of two major components: the central clock, residing in the suprachiasmatic nucleus (SCN) of the brain, and the peripheral clocks that are present in nearly every tissue and organ system. Both the central and peripheral clocks can be reset by environmental cues, also known as Zeitgebers (German for 'timegivers'). The predominant Zeitgeber for the central clock is light, which is sensed by retina and signals directly to the SCN. The central clock entrains the peripheral clocks through neuronal and hormonal signals, body temperature and feeding-related cues, aligning all clocks with the external light/dark cycle. Circadian rhythms allow an organism to achieve temporal homeostasis with its environment at the molecular level by regulating gene expression to create a peak of protein expression once every 24 hours to control when a particular physiological process is most active with respect to the solar day. Transcription and translation of core clock components (CLOCK, NPAS2, BMAL1, BMAL2, PER1, PER2, PER3, CRY1 and CRY2) plays a critical role in rhythm generation, whereas delays imposed by post-translational modifications (PTMs) are important for determining the period (tau) of the rhythms (tau refers to the period of a rhythm and is the length, in time, of one complete cycle). A diurnal rhythm is synchronized with the day/night cycle, while the ultradian and infradian rhythms have a period shorter and longer than 24 hours, respectively. Disruptions in the circadian rhythms contribute to the pathology of cardiovascular diseases, cancer, metabolic syndromes and aging. A transcription/translation feedback loop (TTFL) forms the core of the molecular circadian clock mechanism. Transcription factors, CLOCK or NPAS2 and BMAL1 or BMAL2, form the positive limb of the feedback loop, act in the form of a heterodimer and activate the transcription of core clock genes and clock-controlled genes (involved in key metabolic processes), harboring E-box elements (5'-CACGTG-3') within their promoters. The core clock genes: PER1/2/3 and CRY1/2 which are transcriptional repressors form the negative limb of the feedback loop and interact with the CLOCK|NPAS2-BMAL1|BMAL2 heterodimer inhibiting its activity and thereby negatively regulating their own expression. This heterodimer also activates nuclear receptors NR1D1, NR1D2, RORA, RORB and RORG, which form a second feedback loop and which activate and repress BMAL1 transcription, respectively. Has a redundant role with the other PER proteins PER1 and PER2 and is not essential for the circadian rhythms maintenance. In contrast, plays an important role in sleep-wake timing and sleep homeostasis probably through the transcriptional regulation of sleep homeostasis-related genes, without influencing circadian parameters. Can bind heme. The polypeptide is Period circadian protein homolog 3 (Per3) (Mus musculus (Mouse)).